A 230-amino-acid polypeptide reads, in one-letter code: Cytidylate kinase (230 aa).

An ATP-binding site is contributed by 12–20 (GPSGAGKGT).

This sequence belongs to the cytidylate kinase family. Type 1 subfamily.

Its subcellular location is the cytoplasm. The enzyme catalyses CMP + ATP = CDP + ADP. It catalyses the reaction dCMP + ATP = dCDP + ADP. The protein is Cytidylate kinase of Shewanella sp. (strain W3-18-1).